Reading from the N-terminus, the 85-residue chain is Conotoxin Lv15a (85 aa).

A signal peptide spans 1 to 23; sequence MEKLTVLILVATVLLMIQVLAQS. Residues 24-49 constitute a propeptide that is removed on maturation; sequence GGDKHLKRRPKQYATKRLSALMRGHR. Position 50 is a pyrrolidone carboxylic acid (Gln-50).

It belongs to the conotoxin O2 superfamily. In terms of processing, contains 4 disulfide bonds. In terms of tissue distribution, expressed by the venom duct.

The protein resides in the secreted. The polypeptide is Conotoxin Lv15a (Conus lividus (Livid cone)).